Here is a 422-residue protein sequence, read N- to C-terminus: Serine--tRNA ligase (422 aa).

An L-serine-binding site is contributed by 229–231 (TAE). ATP is bound by residues 260 to 262 (RRE) and Val-276. Glu-283 serves as a coordination point for L-serine. Position 349–352 (349–352 (EVTS)) interacts with ATP. Thr-384 lines the L-serine pocket.

This sequence belongs to the class-II aminoacyl-tRNA synthetase family. Type-1 seryl-tRNA synthetase subfamily. As to quaternary structure, homodimer. The tRNA molecule binds across the dimer.

It is found in the cytoplasm. The enzyme catalyses tRNA(Ser) + L-serine + ATP = L-seryl-tRNA(Ser) + AMP + diphosphate + H(+). It carries out the reaction tRNA(Sec) + L-serine + ATP = L-seryl-tRNA(Sec) + AMP + diphosphate + H(+). The protein operates within aminoacyl-tRNA biosynthesis; selenocysteinyl-tRNA(Sec) biosynthesis; L-seryl-tRNA(Sec) from L-serine and tRNA(Sec): step 1/1. Its function is as follows. Catalyzes the attachment of serine to tRNA(Ser). Is also able to aminoacylate tRNA(Sec) with serine, to form the misacylated tRNA L-seryl-tRNA(Sec), which will be further converted into selenocysteinyl-tRNA(Sec). The chain is Serine--tRNA ligase from Treponema denticola (strain ATCC 35405 / DSM 14222 / CIP 103919 / JCM 8153 / KCTC 15104).